Here is a 520-residue protein sequence, read N- to C-terminus: Ribonuclease Y (520 aa).

Residues 5–25 (ITIISSLLFLIVGLVVGSLIF) form a helical membrane-spanning segment. The tract at residues 76-127 (ELRGRRTETQKAENRLLQREENLDRKDTSLSKREATLERKEESISKRQQQIE) is disordered. A KH domain is found at 210 to 273 (TVSVVTLPND…EIARIALEKL (64 aa)). An HD domain is found at 336–429 (VLNHSLEVSK…VAAADALSAA (94 aa)).

It belongs to the RNase Y family.

It localises to the cell membrane. Endoribonuclease that initiates mRNA decay. The protein is Ribonuclease Y of Listeria monocytogenes serotype 1/2a (strain 10403S).